We begin with the raw amino-acid sequence, 859 residues long: Transforming growth factor-beta receptor-associated protein 1 (859 aa).

Residues 24–297 (RGLLECVECC…HILQDFEGRV (274 aa)) form the CNH domain. The stretch at 563–727 (KRPLDEQQSG…LLAVYLGPGP (165 aa)) is one CHCR repeat.

It belongs to the TRAP1 family. As to quaternary structure, interacts with TGFBR2 and ACVR2B; in the absence of ligand stimulation. Interacts with TGFBR1, ACVRL1, BMPR1A and ACVR1B; in the absence of ligand stimulation and to a less extent. Interacts with SMAD4; the interaction seems to be mutually exclusive with the interaction of SMAD4 and phosphorylated SMAD2. May interact with ALOX5. Interacts with RAB5C. Interacts with VPS8, VPS11 and VPS16. Component of the putative class C core vacuole/endosome tethering (CORVET) complex; the core of which composed of the class C Vps proteins VPS11, VPS16, VPS18 and VPS33A, is associated with VPS8 and TGFBRAP1.

It localises to the cytoplasm. Its subcellular location is the early endosome. In terms of biological role, plays a role in the TGF-beta/activin signaling pathway. It associates with inactive heteromeric TGF-beta and activin receptor complexes, mainly through the type II receptor, and is released upon activation of signaling. May recruit SMAD4 to the vicinity of the receptor complex and facilitate its interaction with receptor-regulated Smads, such as SMAD2. Plays a role in vesicle-mediated protein trafficking of the endocytic membrane transport pathway. Believed to act as a component of the putative CORVET endosomal tethering complexes which is proposed to be involved in the Rab5-to-Rab7 endosome conversion probably implicating MON1A/B, and via binding SNAREs and SNARE complexes to mediate tethering and docking events during SNARE-mediated membrane fusion. The CORVET complex is proposed to function as a Rab5 effector to mediate early endosome fusion probably in specific endosome subpopulations. Functions predominantly in APPL1-containing endosomes and in degradative but not recycling trafficking of endocytosed cargo. In Bos taurus (Bovine), this protein is Transforming growth factor-beta receptor-associated protein 1 (TGFBRAP1).